The primary structure comprises 101 residues: Putative defensin-like protein 307 (101 aa).

The first 22 residues, 1–22 (MEKSALIFIGILLFSTCTSIMA), serve as a signal peptide directing secretion. 3 disulfides stabilise this stretch: Cys-29–Cys-49, Cys-35–Cys-54, and Cys-40–Cys-56.

It belongs to the DEFL family.

Its subcellular location is the secreted. The chain is Putative defensin-like protein 307 from Arabidopsis thaliana (Mouse-ear cress).